The sequence spans 1148 residues: Signal transducer and activator of transcription B (1148 aa).

The segment covering 1-36 (MEVTNNGSNNSSTIASTNPPTSPSTTSTSKSLPPLS) has biased composition (low complexity). Disordered stretches follow at residues 1–81 (MEVT…NNNN), 93–178 (SSSN…LSSS), 268–312 (NTNN…PSNG), 403–425 (KNNI…NSLL), and 453–645 (YDYN…KTVT). Residues 37–47 (FLNSQWENKQS) are compositionally biased toward polar residues. 3 stretches are compositionally biased toward low complexity: residues 48–81 (NNNN…NNNN), 106–178 (NNNN…LSSS), and 268–298 (NTNN…NNNN). Low complexity predominate over residues 466-517 (SNSSNNNSSNNNSNNNNNNNSNNNNNIIGSISPPHSSQLQQVSSPQQQQQQQ). A compositionally biased stretch (polar residues) spans 525 to 541 (SISSGSIKDLINSPNKE). The segment covering 544-557 (SKSQYPSSLSQSSS) has biased composition (low complexity). The segment covering 561-572 (MDTDVDSTDEFD) has biased composition (acidic residues). Positions 574–610 (GSNSNNNNNNNNNNNNNNNSNNSNNKKRNNSNNNNLG) are enriched in low complexity. The SH2 domain maps to 997-1122 (WQNGFIFMFL…TIPVFKREPK (126 aa)).

It belongs to the transcription factor STAT family. As to quaternary structure, homodimer. Does not form heterodimers with other family members.

Its subcellular location is the nucleus. Transcription factor that regulates gene expression during development. Required for optimal cell growth. The sequence is that of Signal transducer and activator of transcription B (dstB) from Dictyostelium discoideum (Social amoeba).